We begin with the raw amino-acid sequence, 69 residues long: U2-agatoxin-Ao1e (69 aa).

A signal peptide spans 1 to 20 (MRAIISVLLISAMVFSIIEA). Residues 21 to 34 (VPLEEGLQLFEAER) constitute a propeptide that is removed on maturation. 3 disulfide bridges follow: C37–C53, C44–C58, and C52–C68.

This sequence belongs to the neurotoxin 01 (U2-agtx) family. As to expression, expressed by the venom gland.

It is found in the secreted. In terms of biological role, insect active toxin causing rapid but reversible paralysis in crickets. No activity shown in mammals. Does not show effect on mammalian voltage-gated calcium channels. The sequence is that of U2-agatoxin-Ao1e from Agelena orientalis (Funnel-web spider).